A 210-amino-acid chain; its full sequence is Probable GTP-binding protein EngB (210 aa).

The EngB-type G domain maps to 25–199 (TGIEVAFAGR…RQKLDTWFSE (175 aa)). GTP-binding positions include 33 to 40 (GRSNAGKS), 60 to 64 (GRTQL), 78 to 81 (DLPG), 145 to 148 (TKAD), and 178 to 180 (FSS). Mg(2+)-binding residues include Ser-40 and Thr-62.

Belongs to the TRAFAC class TrmE-Era-EngA-EngB-Septin-like GTPase superfamily. EngB GTPase family. Mg(2+) is required as a cofactor.

In terms of biological role, necessary for normal cell division and for the maintenance of normal septation. In Escherichia coli O6:H1 (strain CFT073 / ATCC 700928 / UPEC), this protein is Probable GTP-binding protein EngB.